Consider the following 535-residue polypeptide: CTP synthase (535 aa).

Residues Arg300–Lys535 form the Glutamine amidotransferase type-1 domain. Residues Cys385, His509, and Glu511 each act as for GATase activity in the active site.

The protein belongs to the CTP synthase family.

The catalysed reaction is UTP + L-glutamine + ATP + H2O = CTP + L-glutamate + ADP + phosphate + 2 H(+). It participates in pyrimidine metabolism; CTP biosynthesis via de novo pathway; CTP from UDP: step 2/2. Its function is as follows. Catalyzes the ATP-dependent amination of UTP to CTP with either L-glutamine or ammonia as the source of nitrogen. This is CTP synthase from Encephalitozoon cuniculi (strain GB-M1) (Microsporidian parasite).